The sequence spans 109 residues: Protein phosphatase 1 regulatory subunit 1C (109 aa).

Positions 25 to 109 are disordered; sequence AEQIRKRRPT…TNEREEQRDH (85 aa). Over residues 45-54 the composition is skewed to basic and acidic residues; sequence NPPEIDDKRV. Residues 55 to 75 show a composition bias toward polar residues; that stretch reads PNTQGELQNASPKQRKQSVYT. Residues 100–109 are compositionally biased toward basic and acidic residues; the sequence is TNEREEQRDH.

The protein belongs to the protein phosphatase inhibitor 1 family.

The protein resides in the cytoplasm. In terms of biological role, may increase cell susceptibility to TNF-induced apoptosis. This Pongo abelii (Sumatran orangutan) protein is Protein phosphatase 1 regulatory subunit 1C (PPP1R1C).